A 607-amino-acid chain; its full sequence is UvrABC system protein C (607 aa).

Residues 16–94 form the GIY-YIG domain; the sequence is GRPGVYRMFD…IKEWRPPYNI (79 aa). The region spanning 203-238 is the UVR domain; that stretch reads HALTNELSTAMEEAAINLEFERAAELRDQIALLRRV.

Belongs to the UvrC family. In terms of assembly, interacts with UvrB in an incision complex.

The protein localises to the cytoplasm. The UvrABC repair system catalyzes the recognition and processing of DNA lesions. UvrC both incises the 5' and 3' sides of the lesion. The N-terminal half is responsible for the 3' incision and the C-terminal half is responsible for the 5' incision. This chain is UvrABC system protein C, found in Pseudomonas fluorescens (strain Pf0-1).